Reading from the N-terminus, the 270-residue chain is Bifunctional folate synthesis protein (270 aa).

The tract at residues 1-119 is DHNA; it reads MDQLQIKDLE…TCSVTIHRRK (119 aa). Substrate-binding positions include glutamate 21, tyrosine 53, and 72-73; that span reads IE. Lysine 99 (proton donor/acceptor; for DHNA activity) is an active-site residue. Residues 120–270 are HPPK; sequence QRAFIALGSN…IRNLYDALKK (151 aa). Residues 160–163, 171–173, 192–195, 200–215, 227–233, and 238–240 contribute to the ATP site; these read TEPW, FAN, LAIE, RVRE…DLDL, DLILPHP, and RLF. Residues aspartate 212 and aspartate 214 each coordinate Mg(2+).

This sequence in the N-terminal section; belongs to the DHNA family. The protein in the C-terminal section; belongs to the HPPK family. In terms of assembly, homotrimer or homotetramer.

The catalysed reaction is 7,8-dihydroneopterin = 6-hydroxymethyl-7,8-dihydropterin + glycolaldehyde. It catalyses the reaction 6-hydroxymethyl-7,8-dihydropterin + ATP = (7,8-dihydropterin-6-yl)methyl diphosphate + AMP + H(+). It functions in the pathway cofactor biosynthesis; tetrahydrofolate biosynthesis; 2-amino-4-hydroxy-6-hydroxymethyl-7,8-dihydropteridine diphosphate from 7,8-dihydroneopterin triphosphate: step 3/4. It participates in cofactor biosynthesis; tetrahydrofolate biosynthesis; 2-amino-4-hydroxy-6-hydroxymethyl-7,8-dihydropteridine diphosphate from 7,8-dihydroneopterin triphosphate: step 4/4. In terms of biological role, catalyzes two sequential steps of tetrahydrofolate biosynthesis, the conversion of 7,8-dihydroneopterin to 6-hydroxymethyl-7,8-dihydropterin diphosphate. This chain is Bifunctional folate synthesis protein, found in Streptococcus pneumoniae serotype 4 (strain ATCC BAA-334 / TIGR4).